A 137-amino-acid chain; its full sequence is ATP synthase epsilon chain (137 aa).

This sequence belongs to the ATPase epsilon chain family. As to quaternary structure, F-type ATPases have 2 components, CF(1) - the catalytic core - and CF(0) - the membrane proton channel. CF(1) has five subunits: alpha(3), beta(3), gamma(1), delta(1), epsilon(1). CF(0) has three main subunits: a, b and c.

It is found in the cell membrane. In terms of biological role, produces ATP from ADP in the presence of a proton gradient across the membrane. The chain is ATP synthase epsilon chain from Caldicellulosiruptor saccharolyticus (strain ATCC 43494 / DSM 8903 / Tp8T 6331).